We begin with the raw amino-acid sequence, 493 residues long: MVAQNSDKMRALALKLFEINAFKFGDFKMKVGINSPVYFDLRVIVSYPDVMQTVSDLLVEHIKDKQLSAKHVCGVPYTALPLATIVSVQQGTPMLVRRKEAKAYGTKKLVEGIFNAGDTCLIVEDVVTSGSSILDTVRDLQGEGIVVTDAVVVVDREQGGVANIAKHGVRMHSLFTLSFLLNTLHEAGRIEKSTVEAVAKYIAAVQINSDGTFVGGDKGDVVRANDLQRTKLTYENRANLAKSAVAKRLFNLIASKQTNLCLAADLTHADEILDVADKCGPYICLLKTHVDIVEDFSDKFIADLQALAQRHNFLLMEDRKFADIGNTVSLQYGKGIYKISSWADLVTAHTLPGRSILQGLKAGLGEGGAGKERGVFLLAEMSASGNLIDAKYKENSNKIATEGADVDFVAGVVCQSSDAFAFPGLLQLTPGVKIDEGVDQLGQQYQSPEHVVKERGADIGVVGRGILKASSPKQAAQTYRDRLWAAYQDRVAK.

The interval 1 to 207 (MVAQNSDKMR…VAKYIAAVQI (207 aa)) is OPRTase. Residues 208-233 (NSDGTFVGGDKGDVVRANDLQRTKLT) are domain linker. An OMPdecase region spans residues 234–493 (YENRANLAKS…WAAYQDRVAK (260 aa)). Lysine 320 is a catalytic residue.

In the N-terminal section; belongs to the purine/pyrimidine phosphoribosyltransferase family. The protein in the C-terminal section; belongs to the OMP decarboxylase family.

The catalysed reaction is orotidine 5'-phosphate + diphosphate = orotate + 5-phospho-alpha-D-ribose 1-diphosphate. The enzyme catalyses orotidine 5'-phosphate + H(+) = UMP + CO2. The protein operates within pyrimidine metabolism; UMP biosynthesis via de novo pathway; UMP from orotate: step 1/2. Its pathway is pyrimidine metabolism; UMP biosynthesis via de novo pathway; UMP from orotate: step 2/2. The chain is Uridine 5'-monophosphate synthase (r-l) from Drosophila melanogaster (Fruit fly).